The chain runs to 339 residues: Anthranilate phosphoribosyltransferase (339 aa).

Residues Gly82, 85-86, Thr90, 92-95, 110-118, and Ser122 each bind 5-phospho-alpha-D-ribose 1-diphosphate; these read GD, NIST, and KHGNRSASG. Residue Gly82 coordinates anthranilate. Ser94 provides a ligand contact to Mg(2+). Asn113 provides a ligand contact to anthranilate. Position 168 (Arg168) interacts with anthranilate. Asp226 and Glu227 together coordinate Mg(2+).

This sequence belongs to the anthranilate phosphoribosyltransferase family. As to quaternary structure, homodimer. Mg(2+) serves as cofactor.

The catalysed reaction is N-(5-phospho-beta-D-ribosyl)anthranilate + diphosphate = 5-phospho-alpha-D-ribose 1-diphosphate + anthranilate. It functions in the pathway amino-acid biosynthesis; L-tryptophan biosynthesis; L-tryptophan from chorismate: step 2/5. Its function is as follows. Catalyzes the transfer of the phosphoribosyl group of 5-phosphorylribose-1-pyrophosphate (PRPP) to anthranilate to yield N-(5'-phosphoribosyl)-anthranilate (PRA). The polypeptide is Anthranilate phosphoribosyltransferase (Methanosphaerula palustris (strain ATCC BAA-1556 / DSM 19958 / E1-9c)).